Reading from the N-terminus, the 344-residue chain is Thiamine thiazole synthase (344 aa).

Substrate is bound by residues Cys-90, 111-112 (EA), Gly-119, and Val-184. Cys-232 carries the post-translational modification 2,3-didehydroalanine (Cys). Substrate contacts are provided by residues Asp-234, His-249, Met-301, and 311–313 (RMG).

Belongs to the THI4 family. As to quaternary structure, homooctamer. Interacts with cyp-41. The cofactor is Fe cation. During the catalytic reaction, a sulfide is transferred from Cys-232 to a reaction intermediate, generating a dehydroalanine residue.

It localises to the cytoplasm. The protein resides in the nucleus. It carries out the reaction [ADP-thiazole synthase]-L-cysteine + glycine + NAD(+) = [ADP-thiazole synthase]-dehydroalanine + ADP-5-ethyl-4-methylthiazole-2-carboxylate + nicotinamide + 3 H2O + 2 H(+). Its function is as follows. Involved in biosynthesis of the thiamine precursor thiazole. Catalyzes the conversion of NAD and glycine to adenosine diphosphate 5-(2-hydroxyethyl)-4-methylthiazole-2-carboxylic acid (ADT), an adenylated thiazole intermediate. The reaction includes an iron-dependent sulfide transfer from a conserved cysteine residue of the protein to a thiazole intermediate. The enzyme can only undergo a single turnover, which suggests it is a suicide enzyme. May have additional roles in adaptation to various stress conditions and in DNA damage tolerance. This Neurospora crassa (strain ATCC 24698 / 74-OR23-1A / CBS 708.71 / DSM 1257 / FGSC 987) protein is Thiamine thiazole synthase.